A 373-amino-acid polypeptide reads, in one-letter code: Potential protein lysine methyltransferase SET6 (373 aa).

One can recognise an SET domain in the interval Pro12 to Ser338.

The protein belongs to the class V-like SAM-binding methyltransferase superfamily.

Involved in resistance to compounds that target ergosterol biosynthesis, including fenpropimorph, dyclonine, and alverine citrate. Since a deletion in the absence of these compounds does not have an effect on growth, is more likely to be involved in compound availability. This chain is Potential protein lysine methyltransferase SET6 (SET6), found in Saccharomyces cerevisiae (strain ATCC 204508 / S288c) (Baker's yeast).